Here is a 65-residue protein sequence, read N- to C-terminus: Toxin VmKTx1 (65 aa).

A signal peptide spans 1-21; that stretch reads MKTSCLLTILLLSFLVAVAVA. Positions 22 to 28 are excised as a propeptide; the sequence is EGERSAR. 4 disulfides stabilise this stretch: Cys-34/Cys-54, Cys-40/Cys-59, Cys-44/Cys-61, and Cys-49/Cys-64. Cys-64 is modified (cysteine amide).

Belongs to the short scorpion toxin superfamily. Potassium channel inhibitor family. Alpha-KTx 23 subfamily. As to expression, expressed by the venom gland.

The protein resides in the secreted. Voltage-gated potassium channel inhibitor. Selectively and reversibly binds (Kd=0.77 nM) and blocks hKv1.3/KCNA3 potassium channels of human T-lymphocytes. Also shows a very weak effect on hKv1.2/KCNA2 (Kd=7.1 uM). Also reduces the fraction of CD40L expressing T cells that are stimulated by alphaCD3/alphaCD28. The chain is Toxin VmKTx1 from Vaejovis mexicanus smithi (Mexican scorpion).